The sequence spans 88 residues: MAKSSSTKRRPAPEKPVKTRKCVFCSKKGKNQVIDYKDTQLLRTYISERGKIRARRVTGNCVQHQRDIAIAVKNAREVALLPFSSSTR.

The protein belongs to the bacterial ribosomal protein bS18 family. As to quaternary structure, part of the 30S ribosomal subunit. Forms a tight heterodimer with protein bS6.

Functionally, binds as a heterodimer with protein bS6 to the central domain of the 16S rRNA, where it helps stabilize the platform of the 30S subunit. This chain is Small ribosomal subunit protein bS18A, found in Mycolicibacterium gilvum (strain PYR-GCK) (Mycobacterium gilvum (strain PYR-GCK)).